The primary structure comprises 1930 residues: Ankyrin repeat domain-containing protein SAT10 (1930 aa).

20 ANK repeats span residues 840–872 (FRHTPLGVATAYGDADVIDLLINHDISWWDLEE), 878–908 (GTWNALHHAALGGQRNIMCKLLLQQRKGVLN), 920–949 (SGNTPLILAASRGFHKIVALLLEDGSMRGY), 959–989 (QRSSALLAAARYGFSQTLEMLLTYEGIDYSK), 993–1023 (NGASILHLALVNDREAAALQILAHKDIFSNE), 1073–1102 (SGLTSLTIAIWRNLKSIVEILIAMDADANG), 1106–1135 (EFEAPLVAAAEVGSFELFTMFTKIGATKTE), 1144–1174 (GRTRPLHAACAMGHLEVVRELLKDSVTQLSH), 1178–1205 (NQRTPLCAAISRDQNHVISVLLDRETET), 1206–1235 (GLQEGLWEAARSGKAHILDQLLRRGAEINA), 1239–1268 (YGNTALQWASYYNKPRCVERLLLGGARLDL), 1272–1301 (DNVNALGDAARSGSAEPLKLLVDVGVDVNA), 1304–1333 (GGDTALCRAIWAEEVECVSVLLQGGAKFIL), 1339–1368 (RFENLLTFAVQVSSPEILRLLLKAPEERDL), 1400–1429 (SGWTILHLAAVHGTLAGLTKVLDHATGRAA), 1514–1543 (QNMLASAWMDTERSLKLLGILLEAGVSLTP), 1548–1577 (RHGTALHTAALFSPKPLVEKVIETSRMLAD), 1615–1644 (MGRNAVHLAAAAGARSVLEKIFEVEENEDL), 1651–1680 (DGWTPFHWACRGEDDDCARFLIEKARKIFD), and 1696–1724 (KTWTPLDVARFHQRREVELLLSLGMTTSD).

Its pathway is mycotoxin biosynthesis. Its function is as follows. Ankyrin repeat domain-containing protein; part of the satratoxin SC1 cluster involved in the biosynthesis of satratoxins, trichothecene mycotoxins that are associated with human food poisonings. Satratoxins are suggested to be made by products of multiple gene clusters (SC1, SC2 and SC3) that encode 21 proteins in all, including polyketide synthases, acetyltransferases, and other enzymes expected to modify the trichothecene skeleton. SC1 encodes 10 proteins, SAT1 to SAT10. The largest are SAT8, which encodes a putative polyketide synthase (PKS) with a conventional non-reducing architecture, and SAT10, a putative protein containing four ankyrin repeats and thus may be involved in protein scaffolding. The putative short-chain reductase SAT3 may assist the PKS in some capacity. SAT6 contains a secretory lipase domain and acts probably as a trichothecene esterase. SAT5 encodes a putative acetyltransferase, and so, with SAT6, may affect endogenous protection from toxicity. The probable transcription factor SAT9 may regulate the expression of the SC1 cluster. SC2 encodes proteins SAT11 to SAT16, the largest of which encodes the putative reducing PKS SAT13. SAT11 is a cytochrome P450 monooxygenase, while SAT14 and SAT16 are probable acetyltransferases. The SC2 cluster may be regulated by the transcription factor SAT15. SC3 is a small cluster that encodes 5 proteins, SAT17 to SAT21. SAT21 is a putative MFS-type transporter which may have a role in exporting secondary metabolites. The four other proteins putatively encoded in SC3 include the taurine hydroxylase-like protein SAT17, the O-methyltransferase SAT18, the acetyltransferase SAT19, and the Cys6-type zinc finger SAT20, the latter being probably involved in regulation of SC3 expression. This Stachybotrys chartarum (strain CBS 109288 / IBT 7711) (Toxic black mold) protein is Ankyrin repeat domain-containing protein SAT10.